Reading from the N-terminus, the 279-residue chain is MKKLTLKAPAKVNYRLDVLRRRPDGYHDLRMIMQRIDLCDEIEICLTDGPGIRVVCGREGVPDGPGNIAWRAADALLALSADKPGIDISITKKIPVAAGLGGGSSDAATVLMGVNELLGLDLPEKRLREIGVTLGADVPFFIFGRTALAEGIGEELTAIDRVPAAWIVVVNPNVPVSTAWVYQNLQLTGEAARVKIPRFFESVAEVCAILSNDLESVTIPRYPVIGEIKRELLAAGALGSLMSGSGPTVFALFEEEDAAVRAAEMMRARSWFAAAVRTI.

The active site involves K11. Position 95–105 (95–105) interacts with ATP; it reads PVAAGLGGGSS. Residue D137 is part of the active site.

This sequence belongs to the GHMP kinase family. IspE subfamily.

The catalysed reaction is 4-CDP-2-C-methyl-D-erythritol + ATP = 4-CDP-2-C-methyl-D-erythritol 2-phosphate + ADP + H(+). It functions in the pathway isoprenoid biosynthesis; isopentenyl diphosphate biosynthesis via DXP pathway; isopentenyl diphosphate from 1-deoxy-D-xylulose 5-phosphate: step 3/6. Catalyzes the phosphorylation of the position 2 hydroxy group of 4-diphosphocytidyl-2C-methyl-D-erythritol. The polypeptide is 4-diphosphocytidyl-2-C-methyl-D-erythritol kinase (Geobacter sulfurreducens (strain ATCC 51573 / DSM 12127 / PCA)).